The sequence spans 116 residues: Large ribosomal subunit protein uL18 (116 aa).

This sequence belongs to the universal ribosomal protein uL18 family. As to quaternary structure, part of the 50S ribosomal subunit; part of the 5S rRNA/L5/L18/L25 subcomplex. Contacts the 5S and 23S rRNAs.

This is one of the proteins that bind and probably mediate the attachment of the 5S RNA into the large ribosomal subunit, where it forms part of the central protuberance. The chain is Large ribosomal subunit protein uL18 from Shewanella frigidimarina (strain NCIMB 400).